The sequence spans 171 residues: 3-hydroxydecanoyl-[acyl-carrier-protein] dehydratase (171 aa).

The active site involves His-70.

The protein belongs to the thioester dehydratase family. FabA subfamily. As to quaternary structure, homodimer.

The protein resides in the cytoplasm. The enzyme catalyses a (3R)-hydroxyacyl-[ACP] = a (2E)-enoyl-[ACP] + H2O. It catalyses the reaction (3R)-hydroxydecanoyl-[ACP] = (2E)-decenoyl-[ACP] + H2O. The catalysed reaction is (2E)-decenoyl-[ACP] = (3Z)-decenoyl-[ACP]. It functions in the pathway lipid metabolism; fatty acid biosynthesis. Its function is as follows. Necessary for the introduction of cis unsaturation into fatty acids. Catalyzes the dehydration of (3R)-3-hydroxydecanoyl-ACP to E-(2)-decenoyl-ACP and then its isomerization to Z-(3)-decenoyl-ACP. Can catalyze the dehydratase reaction for beta-hydroxyacyl-ACPs with saturated chain lengths up to 16:0, being most active on intermediate chain length. The protein is 3-hydroxydecanoyl-[acyl-carrier-protein] dehydratase of Shewanella sp. (strain ANA-3).